Reading from the N-terminus, the 404-residue chain is Dihydroorotase (404 aa).

Positions 57 and 59 each coordinate Zn(2+). Substrate-binding positions include 59–61 (HLR) and asparagine 91. Residues lysine 135, histidine 164, histidine 204, and aspartate 272 each contribute to the Zn(2+) site. An N6-carboxylysine modification is found at lysine 135. The active site involves aspartate 272. Substrate is bound by residues histidine 276 and 286–287 (AG).

It belongs to the metallo-dependent hydrolases superfamily. DHOase family. Class I DHOase subfamily. The cofactor is Zn(2+).

The catalysed reaction is (S)-dihydroorotate + H2O = N-carbamoyl-L-aspartate + H(+). It participates in pyrimidine metabolism; UMP biosynthesis via de novo pathway; (S)-dihydroorotate from bicarbonate: step 3/3. Its function is as follows. Catalyzes the reversible cyclization of carbamoyl aspartate to dihydroorotate. The protein is Dihydroorotase of Pyrococcus abyssi (strain GE5 / Orsay).